The chain runs to 473 residues: Photosystem II CP43 reaction center protein (473 aa).

A propeptide spanning residues Met1 to Glu14 is cleaved from the precursor. Position 15 is an N-acetylthreonine (Thr15). Residue Thr15 is modified to Phosphothreonine. 5 helical membrane passes run Leu69–Ala93, Leu134–Asn155, Lys178–Thr200, Lys255–Ser275, and Trp291–Ala312. Residue Glu367 coordinates [CaMn4O5] cluster. Residues Arg447 to Pro471 form a helical membrane-spanning segment.

This sequence belongs to the PsbB/PsbC family. PsbC subfamily. As to quaternary structure, PSII is composed of 1 copy each of membrane proteins PsbA, PsbB, PsbC, PsbD, PsbE, PsbF, PsbH, PsbI, PsbJ, PsbK, PsbL, PsbM, PsbT, PsbX, PsbY, PsbZ, Psb30/Ycf12, at least 3 peripheral proteins of the oxygen-evolving complex and a large number of cofactors. It forms dimeric complexes. The cofactor is Binds multiple chlorophylls and provides some of the ligands for the Ca-4Mn-5O cluster of the oxygen-evolving complex. It may also provide a ligand for a Cl- that is required for oxygen evolution. PSII binds additional chlorophylls, carotenoids and specific lipids..

Its subcellular location is the plastid. The protein resides in the chloroplast thylakoid membrane. Its function is as follows. One of the components of the core complex of photosystem II (PSII). It binds chlorophyll and helps catalyze the primary light-induced photochemical processes of PSII. PSII is a light-driven water:plastoquinone oxidoreductase, using light energy to abstract electrons from H(2)O, generating O(2) and a proton gradient subsequently used for ATP formation. The chain is Photosystem II CP43 reaction center protein from Buxus microphylla (Littleleaf boxwood).